A 243-amino-acid polypeptide reads, in one-letter code: MGHKIHPSGLRLGITQEHRSKWFATSKTYPILLQEDFKIRTFIQKKYGAAGISDVLIARKADQLELELKTARPGVIVGRQGSGIEELRSGIQKTIGDRTRQVRINVVEVERVDADAFLLAEYIAQQLEKRVAFRRTIRMALQRAQRAGVLGLKIQVGGRLNGAEIARTEWTREGRVPLHTLRAEIDYATREANTTYGVLGIKVWVFKGEVLPKEEQTIPVGASPKRKASRRPQQFEDRSNENS.

The KH type-2 domain maps to 39-110; sequence IRTFIQKKYG…QVRINVVEVE (72 aa). The interval 216-243 is disordered; the sequence is QTIPVGASPKRKASRRPQQFEDRSNENS. Positions 233 to 243 are enriched in basic and acidic residues; that stretch reads QQFEDRSNENS.

The protein belongs to the universal ribosomal protein uS3 family. In terms of assembly, part of the 30S ribosomal subunit. Forms a tight complex with proteins S10 and S14.

Functionally, binds the lower part of the 30S subunit head. Binds mRNA in the 70S ribosome, positioning it for translation. In Prochlorococcus marinus (strain AS9601), this protein is Small ribosomal subunit protein uS3.